A 186-amino-acid polypeptide reads, in one-letter code: Iodotyrosine deiodinase (186 aa).

Residues 11 to 15 (RKTVR), 38 to 39 (PS), and S39 each bind FMN. M41, E68, Y72, and K92 together coordinate 3-iodo-L-tyrosine. L-tyrosine is bound by residues M41, E68, Y72, and K92. FMN is bound at residue R176.

It belongs to the nitroreductase family. In terms of assembly, homodimer. It depends on FMN as a cofactor.

The catalysed reaction is 2 iodide + L-tyrosine + 2 NADP(+) = 3,5-diiodo-L-tyrosine + 2 NADPH + H(+). It carries out the reaction iodide + L-tyrosine + NADP(+) = 3-iodo-L-tyrosine + NADPH. It catalyses the reaction 3-iodo-L-tyrosine + iodide + NADP(+) = 3,5-diiodo-L-tyrosine + NADPH + H(+). The enzyme catalyses L-tyrosine + chloride + NADP(+) = 3-chloro-L-tyrosine + NADPH. The catalysed reaction is bromide + L-tyrosine + NADP(+) = 3-bromo-L-tyrosine + NADPH. Catalyzes the dehalogenation of halotyrosines such as 3-bromo-L-tyrosine, 3-chloro-L-tyrosine, 3-iodo-L-tyrosine and 3,5-diiodo-L-tyrosine. Activity towards 2-iodophenol is weak. The polypeptide is Iodotyrosine deiodinase (Thermotoga neapolitana (strain ATCC 49049 / DSM 4359 / NBRC 107923 / NS-E)).